The following is a 512-amino-acid chain: MKAGCSIVEKPEGGGGYQFPDWAYKTESSPGSRQIQLWHFILELLQKEEFRHVIAWQQGEYGEFVIKDPDEVARLWGRRKCKPQMNYDKLSRALRYYYNKRILHKTKGKRFTYKFNFNKLVMPNYPFINIRSSGVVPQSAPPVPTASSRFHFPPLDTHSPTNDVQPGRFSASSLTASGQESSNGTDRKTELSELEDGSAADWRRGVDPMSSRNAIGGGGIGHQKRKPDIMLPLFARPGMYPDAHSPFAVSPLPGRGGVLNVPISPALSLTPTIFSYSPSPGLSPFTSSSCFSFNPEEMKHYLHSQACSVFNYHLSPRTFPRYPGLMVPPLQCQMHPEESTQFSIKLQPPPVGRKNRERVESSEESAPVTTPTMASIPPRIKVEPASEKDPESLRQSAREKEEHTQEEGTVPSRTIEEEKGTIFARPAAPPIWPSVPISTPSEEPLEVTEDIEDRPGKEPSAPEKKEDALMPPKLRLKRRWNDDPEARELSKSGKFLWNGSGPQGLATAAADA.

The segment at residues 35–116 is a DNA-binding region (ETS); it reads IQLWHFILEL…KGKRFTYKFN (82 aa). Residues 136 to 222 are disordered; that stretch reads VPQSAPPVPT…NAIGGGGIGH (87 aa). 3 positions are modified to phosphoserine: serine 139, serine 159, and serine 315. Residues 158 to 184 are compositionally biased toward polar residues; sequence HSPTNDVQPGRFSASSLTASGQESSNG. A disordered region spans residues 336–512; it reads PEESTQFSIK…QGLATAAADA (177 aa). The span at 380 to 406 shows a compositional bias: basic and acidic residues; sequence IKVEPASEKDPESLRQSAREKEEHTQE. Lysine 381 is covalently cross-linked (Glycyl lysine isopeptide (Lys-Gly) (interchain with G-Cter in SUMO2)). At lysine 388 the chain carries N6-acetyllysine; alternate. Residue lysine 388 forms a Glycyl lysine isopeptide (Lys-Gly) (interchain with G-Cter in SUMO2); alternate linkage. The span at 443–452 shows a compositional bias: acidic residues; it reads EPLEVTEDIE. Basic and acidic residues-rich tracts occupy residues 453 to 468 and 479 to 491; these read DRPG…KEDA and RWND…ELSK.

It belongs to the ETS family.

The protein resides in the nucleus. Transcriptional repressor that contribute to growth arrest during terminal macrophage differentiation by repressing target genes involved in Ras-dependent proliferation. Represses MMP1 promoter activity. This Pan paniscus (Pygmy chimpanzee) protein is ETS translocation variant 3 (ETV3).